The chain runs to 1332 residues: Sister chromatid cohesion protein PDS5 homolog A (1332 aa).

Residue M1 is modified to N-acetylmethionine. The HEAT repeat unit spans residues 392-428 (ALVNDQLLGFVRERTLDKRWRVRKEAMMGLAQLYKKY). A Phosphoserine modification is found at S1096. Residues 1138 to 1332 (GVLGTVNKPL…PAERQIDLQR (195 aa)) form a disordered region. K1145 bears the N6-acetyllysine mark. Positions 1160-1173 (GTETGSNINANSEL) are enriched in polar residues. A phosphoserine mark is found at S1174 and S1194. A Phosphothreonine modification is found at T1207. K1210 carries the post-translational modification N6-acetyllysine. Positions 1222–1232 (SDQSTQGNISS) are enriched in polar residues. N6-acetyllysine is present on K1288. The residue at position 1303 (S1303) is a Phosphoserine. The span at 1316-1332 (DGAKKAVPAERQIDLQR) shows a compositional bias: basic and acidic residues.

Belongs to the PDS5 family. As to quaternary structure, interacts with the cohesin complex. Interacts with WAPL (via FGF motifs) or CDCA5 (via the FGF motif); the interaction is direct, cohesin-dependent and competitive. Interacts with SMC3. Interacts with TP63.

Its subcellular location is the nucleus. Probable regulator of sister chromatid cohesion in mitosis which may stabilize cohesin complex association with chromatin. May couple sister chromatid cohesion during mitosis to DNA replication. Cohesion ensures that chromosome partitioning is accurate in both meiotic and mitotic cells and plays an important role in DNA repair. In Mus musculus (Mouse), this protein is Sister chromatid cohesion protein PDS5 homolog A (Pds5a).